The primary structure comprises 230 residues: Urease accessory protein UreG (230 aa).

The interval 1 to 31 is disordered; it reads MPPHFLSADSTGQPHRHADRPKRVRTPGEPL. Basic residues predominate over residues 14–25; the sequence is PHRHADRPKRVR. 37 to 44 serves as a coordination point for GTP; sequence GPVGSGKT.

The protein belongs to the SIMIBI class G3E GTPase family. UreG subfamily. Homodimer. UreD, UreF and UreG form a complex that acts as a GTP-hydrolysis-dependent molecular chaperone, activating the urease apoprotein by helping to assemble the nickel containing metallocenter of UreC. The UreE protein probably delivers the nickel.

The protein resides in the cytoplasm. Functionally, facilitates the functional incorporation of the urease nickel metallocenter. This process requires GTP hydrolysis, probably effectuated by UreG. The polypeptide is Urease accessory protein UreG (Mycobacterium sp. (strain JLS)).